The following is a 244-amino-acid chain: Probable transcriptional regulatory protein XfasM23_0940 (244 aa).

The protein belongs to the TACO1 family.

The protein localises to the cytoplasm. The chain is Probable transcriptional regulatory protein XfasM23_0940 from Xylella fastidiosa (strain M23).